A 458-amino-acid polypeptide reads, in one-letter code: tRNA-2-methylthio-N(6)-dimethylallyladenosine synthase (458 aa).

Positions 15-134 constitute an MTTase N-terminal domain; sequence KKVFIKTYGC…LPDLLEQTKQ (120 aa). 6 residues coordinate [4Fe-4S] cluster: Cys24, Cys60, Cys97, Cys175, Cys179, and Cys182. The 233-residue stretch at 161–393 folds into the Radical SAM core domain; sequence RKRGVSAFLT…QVLLLEQQNA (233 aa). Residues 396-457 enclose the TRAM domain; that stretch reads RSKIGQTTDV…SNSFVGEMTN (62 aa).

It belongs to the methylthiotransferase family. MiaB subfamily. Monomer. [4Fe-4S] cluster serves as cofactor.

The protein localises to the cytoplasm. It carries out the reaction N(6)-dimethylallyladenosine(37) in tRNA + (sulfur carrier)-SH + AH2 + 2 S-adenosyl-L-methionine = 2-methylsulfanyl-N(6)-dimethylallyladenosine(37) in tRNA + (sulfur carrier)-H + 5'-deoxyadenosine + L-methionine + A + S-adenosyl-L-homocysteine + 2 H(+). Its function is as follows. Catalyzes the methylthiolation of N6-(dimethylallyl)adenosine (i(6)A), leading to the formation of 2-methylthio-N6-(dimethylallyl)adenosine (ms(2)i(6)A) at position 37 in tRNAs that read codons beginning with uridine. The polypeptide is tRNA-2-methylthio-N(6)-dimethylallyladenosine synthase (Bartonella henselae (strain ATCC 49882 / DSM 28221 / CCUG 30454 / Houston 1) (Rochalimaea henselae)).